The chain runs to 227 residues: Ribose-5-phosphate isomerase A (227 aa).

Substrate is bound by residues 28–31 (TGST), 84–87 (DGAD), and 97–100 (KGGG). Glu-106 acts as the Proton acceptor in catalysis. Residue Lys-124 coordinates substrate.

Belongs to the ribose 5-phosphate isomerase family. As to quaternary structure, homodimer.

It catalyses the reaction aldehydo-D-ribose 5-phosphate = D-ribulose 5-phosphate. It participates in carbohydrate degradation; pentose phosphate pathway; D-ribose 5-phosphate from D-ribulose 5-phosphate (non-oxidative stage): step 1/1. Catalyzes the reversible conversion of ribose-5-phosphate to ribulose 5-phosphate. This is Ribose-5-phosphate isomerase A from Lactiplantibacillus plantarum (strain ATCC BAA-793 / NCIMB 8826 / WCFS1) (Lactobacillus plantarum).